Here is a 282-residue protein sequence, read N- to C-terminus: Pantothenate synthetase (282 aa).

26–33 is a binding site for ATP; it reads MGNLHEGH. His-33 functions as the Proton donor in the catalytic mechanism. Gln-57 is a binding site for (R)-pantoate. A beta-alanine-binding site is contributed by Gln-57. 148–151 provides a ligand contact to ATP; sequence GKKD. Gln-154 contributes to the (R)-pantoate binding site. 185-188 contributes to the ATP binding site; the sequence is LSSR.

This sequence belongs to the pantothenate synthetase family. Homodimer.

It localises to the cytoplasm. The catalysed reaction is (R)-pantoate + beta-alanine + ATP = (R)-pantothenate + AMP + diphosphate + H(+). Its pathway is cofactor biosynthesis; (R)-pantothenate biosynthesis; (R)-pantothenate from (R)-pantoate and beta-alanine: step 1/1. Catalyzes the condensation of pantoate with beta-alanine in an ATP-dependent reaction via a pantoyl-adenylate intermediate. The chain is Pantothenate synthetase from Paracidovorax citrulli (strain AAC00-1) (Acidovorax citrulli).